Here is a 508-residue protein sequence, read N- to C-terminus: Glycerol kinase (508 aa).

Position 14 (Thr-14) interacts with ADP. Residues Thr-14, Thr-15, and Ser-16 each contribute to the ATP site. Thr-14 serves as a coordination point for sn-glycerol 3-phosphate. An ADP-binding site is contributed by Arg-18. The sn-glycerol 3-phosphate site is built by Arg-84, Glu-85, Tyr-136, and Asp-245. Glycerol contacts are provided by Arg-84, Glu-85, Tyr-136, Asp-245, and Gln-246. ADP contacts are provided by Thr-267 and Gly-314. Residues Thr-267, Gly-314, and Gln-318 each contribute to the ATP site. Asn-419 provides a ligand contact to ADP.

Belongs to the FGGY kinase family.

The enzyme catalyses glycerol + ATP = sn-glycerol 3-phosphate + ADP + H(+). It participates in polyol metabolism; glycerol degradation via glycerol kinase pathway; sn-glycerol 3-phosphate from glycerol: step 1/1. With respect to regulation, inhibited by fructose 1,6-bisphosphate (FBP). Its function is as follows. Key enzyme in the regulation of glycerol uptake and metabolism. Catalyzes the phosphorylation of glycerol to yield sn-glycerol 3-phosphate. The protein is Glycerol kinase of Bordetella pertussis (strain Tohama I / ATCC BAA-589 / NCTC 13251).